A 35-amino-acid polypeptide reads, in one-letter code: DDCLGMFSSCDPKNDKCCPNRVCRSRDQWCKYKLW.

Intrachain disulfides connect cysteine 3/cysteine 18, cysteine 10/cysteine 23, and cysteine 17/cysteine 30.

This sequence belongs to the neurotoxin 10 (Hwtx-1) family. 58 subfamily. As to quaternary structure, monomer. In terms of tissue distribution, expressed by the venom gland.

The protein resides in the secreted. In terms of biological role, low-affinity blocker of Kv4.2/KCND2 voltage-gated potassium channels. Is presumed to shift the voltage-dependence of channel activation to more depolarized potentials and to bind to the S3-S4 linker region of the voltage sensor domain. In Theraphosa blondi (Goliath birdeating spider), this protein is Kappa-theraphotoxin-Tb1b.